The primary structure comprises 191 residues: Chorion class B protein Ld10 (191 aa).

The signal sequence occupies residues 1 to 21 (MSAKIILVFCAQALFVQSALS).

The protein belongs to the chorion protein family.

Functionally, this protein is one of many from the eggshell of the gypsy moth. The chain is Chorion class B protein Ld10 from Lymantria dispar (Gypsy moth).